We begin with the raw amino-acid sequence, 709 residues long: Polyribonucleotide nucleotidyltransferase (709 aa).

2 residues coordinate Mg(2+): aspartate 485 and aspartate 491. The region spanning 552–611 (PRIYTMKIDPKKIKDVIGKGGATIRSLTEETGTSIDIDDDGTVKIAAVDSNAAKNVMGRI) is the KH domain. In terms of domain architecture, S1 motif spans 621 to 689 (GAIYKGKVTR…RQGRIRLTMK (69 aa)).

The protein belongs to the polyribonucleotide nucleotidyltransferase family. Component of the RNA degradosome, which is a multiprotein complex involved in RNA processing and mRNA degradation. Requires Mg(2+) as cofactor.

The protein localises to the cytoplasm. It carries out the reaction RNA(n+1) + phosphate = RNA(n) + a ribonucleoside 5'-diphosphate. In terms of biological role, involved in mRNA degradation. Catalyzes the phosphorolysis of single-stranded polyribonucleotides processively in the 3'- to 5'-direction. The sequence is that of Polyribonucleotide nucleotidyltransferase from Haemophilus influenzae (strain PittGG).